Consider the following 341-residue polypeptide: 4-hydroxy-2-oxovalerate aldolase (341 aa).

The 252-residue stretch at 9–260 (VVITDSTLRD…ATGIDLYRVL (252 aa)) folds into the Pyruvate carboxyltransferase domain. 17–18 (RD) provides a ligand contact to substrate. D18 contacts Mn(2+). The active-site Proton acceptor is the H21. Positions 172 and 199 each coordinate substrate. The Mn(2+) site is built by H199 and H201.

It belongs to the 4-hydroxy-2-oxovalerate aldolase family.

The enzyme catalyses (S)-4-hydroxy-2-oxopentanoate = acetaldehyde + pyruvate. In Spirochaeta aurantia, this protein is 4-hydroxy-2-oxovalerate aldolase.